The sequence spans 355 residues: Uroporphyrinogen decarboxylase (355 aa).

Substrate contacts are provided by residues 27–31, Asp-77, Tyr-154, Thr-209, and His-327; that span reads RQAGR.

It belongs to the uroporphyrinogen decarboxylase family. As to quaternary structure, homodimer.

It is found in the cytoplasm. The enzyme catalyses uroporphyrinogen III + 4 H(+) = coproporphyrinogen III + 4 CO2. Its pathway is porphyrin-containing compound metabolism; protoporphyrin-IX biosynthesis; coproporphyrinogen-III from 5-aminolevulinate: step 4/4. In terms of biological role, catalyzes the decarboxylation of four acetate groups of uroporphyrinogen-III to yield coproporphyrinogen-III. The polypeptide is Uroporphyrinogen decarboxylase (Yersinia pseudotuberculosis serotype O:1b (strain IP 31758)).